Here is a 339-residue protein sequence, read N- to C-terminus: D-glycero-alpha-D-manno-heptose 7-phosphate kinase (339 aa).

Substrate is bound at residue 17-20 (GGTD). ATP-binding positions include S57 and 110 to 116 (GSGLGGS). Mg(2+)-binding residues include S116 and E148. Catalysis depends on D160, which acts as the Proton acceptor.

This sequence belongs to the GHMP kinase family.

The enzyme catalyses D-glycero-alpha-D-manno-heptose 7-phosphate + ATP = D-glycero-alpha-D-manno-heptose 1,7-bisphosphate + ADP + H(+). It functions in the pathway nucleotide-sugar biosynthesis; GDP-D-glycero-alpha-D-manno-heptose biosynthesis; GDP-D-glycero-alpha-D-manno-heptose from D-glycero-alpha-D-manno-heptose 7-phosphate: step 1/3. The protein operates within capsule biogenesis; capsule polysaccharide biosynthesis. In terms of biological role, catalyzes the phosphorylation of D-glycero-alpha-D-manno-heptose 7-phosphate at the C-1 position to form D-glycero-alpha-D-manno-heptose 1,7-bisphosphate. This chain is D-glycero-alpha-D-manno-heptose 7-phosphate kinase, found in Campylobacter jejuni subsp. jejuni serotype O:2 (strain ATCC 700819 / NCTC 11168).